The primary structure comprises 182 residues: UPF0200 protein Mboo_1593 (182 aa).

An ATP-binding site is contributed by 8–15; that stretch reads GLPASGKG.

The protein belongs to the UPF0200 family.

This chain is UPF0200 protein Mboo_1593, found in Methanoregula boonei (strain DSM 21154 / JCM 14090 / 6A8).